The following is a 350-amino-acid chain: Galactokinase (350 aa).

Residue 14-17 (EHTD) coordinates substrate. ATP contacts are provided by residues S46 and 96 to 102 (GAGLSSS). 2 residues coordinate Mg(2+): S102 and E134. D146 acts as the Proton acceptor in catalysis. A substrate-binding site is contributed by Y196.

It belongs to the GHMP kinase family. GalK subfamily.

It localises to the cytoplasm. It carries out the reaction alpha-D-galactose + ATP = alpha-D-galactose 1-phosphate + ADP + H(+). The protein operates within carbohydrate metabolism; galactose metabolism. In terms of biological role, catalyzes the transfer of the gamma-phosphate of ATP to D-galactose to form alpha-D-galactose-1-phosphate (Gal-1-P). The sequence is that of Galactokinase from Thermotoga neapolitana.